The sequence spans 193 residues: Rho-related GTP-binding protein RhoA-A (193 aa).

Residues 12–19 (GDGACGKT), 30–37 (FPEVYVPT), 59–63 (DTAGQ), 117–120 (NKKD), and 160–162 (SAK) each bind GTP. Residue Tyr34 is glycosylated ((Microbial infection) O-linked (GlcNAc) tyrosine; by Yersinia Afp18). Position 190 is a cysteine methyl ester (Cys190). Cys190 carries S-geranylgeranyl cysteine lipidation. Residues 191 to 193 (ALL) constitute a propeptide, removed in mature form.

This sequence belongs to the small GTPase superfamily. Rho family. In terms of processing, (Microbial infection) Glycosylated at Tyr-34 by Yersinia ruckeri toxin Afp18. Mono-O-GlcNAcylation by Afp18 inhibits RhoA activation by guanine nucleotide exchange factors and blocks RhoA signaling.

It is found in the cell membrane. Regulates a signal transduction pathway linking plasma membrane receptors to the assembly of focal adhesions and actin stress fibers. The polypeptide is Rho-related GTP-binding protein RhoA-A (Danio rerio (Zebrafish)).